The sequence spans 306 residues: Golgi to ER traffic protein 2 (306 aa).

The segment covering 1-18 (MSEISDAEKRRILREKRQ) has biased composition (basic and acidic residues). The tract at residues 1–100 (MSEISDAEKR…PPGSAEQQNG (100 aa)) is disordered. Residues 1–172 (MSEISDAEKR…VEAHNIAVNK (172 aa)) are Cytoplasmic-facing. A compositionally biased stretch (polar residues) spans 34 to 57 (TGQTENSFLSTESPLDSRESTYPA). Over residues 68–77 (DSTKQMDELL) the composition is skewed to basic and acidic residues. Low complexity predominate over residues 78-90 (AKATSKTTSKASS). Positions 91–100 (PPGSAEQQNG) are enriched in polar residues. A helical transmembrane segment spans residues 173–193 (LKSYTILVKWLFFLLPYLYYI). Residues 194–214 (THSARDPFQHNAVNYVLDRSN) are Lumenal-facing. A helical transmembrane segment spans residues 215–234 (FFTVFTTFEIVALSVYYQLL). Residues 235-281 (MSAEKSHNVNTLDNNSKILKLVSMVPPGLVPIPNLRGKVAQALQYWD) are Cytoplasmic-facing. The helical transmembrane segment at 282-302 (VVSMYLTDLCFAIVLAGLFQY) threads the bilayer. The Lumenal segment spans residues 303 to 306 (YHSM).

This sequence belongs to the GET2 family. Component of the Golgi to ER traffic (GET) complex, which is composed of GET1, GET2 and GET3. Within the complex, GET1 and GET2 form a heterotetramer which is stabilized by phosphatidylinositol binding and which binds to the GET3 homodimer.

The protein resides in the endoplasmic reticulum membrane. The protein localises to the golgi apparatus membrane. In terms of biological role, required for the post-translational delivery of tail-anchored (TA) proteins to the endoplasmic reticulum. Together with GET1, acts as a membrane receptor for soluble GET3, which recognizes and selectively binds the transmembrane domain of TA proteins in the cytosol. The GET complex cooperates with the HDEL receptor ERD2 to mediate the ATP-dependent retrieval of resident ER proteins that contain a C-terminal H-D-E-L retention signal from the Golgi to the ER. This chain is Golgi to ER traffic protein 2, found in Lachancea thermotolerans (strain ATCC 56472 / CBS 6340 / NRRL Y-8284) (Yeast).